Reading from the N-terminus, the 131-residue chain is Profilin-6 (131 aa).

C13 and C115 are oxidised to a cystine. The Involved in PIP2 interaction motif lies at 81–97 (VVIRGKKGAGGITIKKT). T111 bears the Phosphothreonine mark.

This sequence belongs to the profilin family. Occurs in many kinds of cells as a complex with monomeric actin in a 1:1 ratio. In terms of processing, phosphorylated by MAP kinases.

The protein localises to the cytoplasm. It localises to the cytoskeleton. Its function is as follows. Binds to actin and affects the structure of the cytoskeleton. At high concentrations, profilin prevents the polymerization of actin, whereas it enhances it at low concentrations. The sequence is that of Profilin-6 from Corylus avellana (European hazel).